Reading from the N-terminus, the 210-residue chain is Cell division protein FtsQ (210 aa).

In terms of domain architecture, POTRA spans leucine 1–arginine 58. A helical membrane pass occupies residues valine 8 to isoleucine 25.

It belongs to the FtsQ/DivIB family. FtsQ subfamily.

Its subcellular location is the cell inner membrane. In terms of biological role, essential cell division protein. The chain is Cell division protein FtsQ from Rhizobium radiobacter (Agrobacterium tumefaciens).